Consider the following 552-residue polypeptide: HTH-type transcriptional regulator SgrR (552 aa).

Positions 1–116 (MPSGRLQQQF…LISHLGRSFR (116 aa)) constitute an HTH marR-type domain. The H-T-H motif DNA-binding region spans 26-49 (LNELADLLNCSRRHMRTLLNTMQA). The segment at 163 to 493 (ELEADIAHHW…RDWQDDAAQW (331 aa)) is solute-binding.

Its function is as follows. Activates the small RNA gene sgrS under glucose-phosphate stress conditions as well as yfdZ. Represses its own transcription under both stress and non-stress conditions. Might act as a sensor of the intracellular accumulation of phosphoglucose by binding these molecules in its C-terminal solute-binding domain. The sequence is that of HTH-type transcriptional regulator SgrR from Salmonella typhi.